Here is a 214-residue protein sequence, read N- to C-terminus: Ribonuclease HII (214 aa).

Positions 18-208 constitute an RNase H type-2 domain; it reads SRVVGVDEVG…SLLPSEAHLC (191 aa). Positions 24, 25, and 116 each coordinate a divalent metal cation.

It belongs to the RNase HII family. Requires Mn(2+) as cofactor. The cofactor is Mg(2+).

It localises to the cytoplasm. It catalyses the reaction Endonucleolytic cleavage to 5'-phosphomonoester.. Endonuclease that specifically degrades the RNA of RNA-DNA hybrids. The polypeptide is Ribonuclease HII (Thermosynechococcus vestitus (strain NIES-2133 / IAM M-273 / BP-1)).